We begin with the raw amino-acid sequence, 309 residues long: Histidine protein methyltransferase 1 homolog (309 aa).

Disordered regions lie at residues 1–37 and 79–111; these read MSFK…FDSS and KPFK…NNKD. The span at 25–37 shows a compositional bias: basic and acidic residues; sequence EESKLDISEFDSS. The segment covering 84–109 has biased composition (low complexity); the sequence is NQDNNNDNNVNSNDKNDNNNNNNNNN. S-adenosyl-L-methionine-binding positions include 132–136, Gly159, 179–181, 209–211, and Ser229; these read LWECS, QDY, and GDW.

Belongs to the methyltransferase superfamily. METTL18 family.

It is found in the cytoplasm. The protein localises to the cytosol. Its subcellular location is the nucleus. It localises to the nucleolus. It catalyses the reaction L-histidyl-[protein] + S-adenosyl-L-methionine = N(tele)-methyl-L-histidyl-[protein] + S-adenosyl-L-homocysteine + H(+). Functionally, protein-L-histidine N-tele-methyltransferase that probably monomethylates RPL3. Through the methylation of RPL3 may regulate the dynamics of pre-rRNA processing, ribosome biogenesis, and translation. The chain is Histidine protein methyltransferase 1 homolog from Dictyostelium discoideum (Social amoeba).